The primary structure comprises 205 residues: Putative 3-methyladenine DNA glycosylase (205 aa).

It belongs to the DNA glycosylase MPG family.

The sequence is that of Putative 3-methyladenine DNA glycosylase from Bacillus cereus (strain B4264).